A 209-amino-acid chain; its full sequence is Transmembrane 4 L6 family member 19 (209 aa).

At 1–16 the chain is on the cytoplasmic side; that stretch reads MVSSPCTQASSRTCSR. The chain crosses the membrane as a helical span at residues 17 to 37; it reads ILGLSLGTAALFAAGANVALL. The Extracellular segment spans residues 38–59; sequence LPNWDVTYLLRGLLGRHAMLGT. The chain crosses the membrane as a helical span at residues 60–80; it reads GLWGGGLMVLTAAILISLMGW. At 81–93 the chain is on the cytoplasmic side; the sequence is RYGCFSKSGLCRS. The helical transmembrane segment at 94 to 114 threads the bilayer; sequence VLTALLSGGLALLGALICFVT. The Extracellular segment spans residues 115–175; the sequence is SGVALKDGPF…PSAAVVWHVS (61 aa). An N-linked (GlcNAc...) asparagine glycan is attached at N133. The chain crosses the membrane as a helical span at residues 176–196; sequence LFSALLCISLLQLLLVVVHVI. Residues 186–196 are important for homodimerization; sequence LQLLLVVVHVI. The Cytoplasmic portion of the chain corresponds to 197–209; the sequence is NSLLGLFCSLCEK.

The protein belongs to the L6 tetraspanin family. As to quaternary structure, may form homodimers and homooligomers. Interacts with integrins ITGAV and ITGB3. Interacts with components of members of the V0 complex of vacuolar(H+)-ATPase (V-ATPase), including ATP6V0B and ATP6V0D2; this interaction inhibits V1-V0 complex assembly. As to expression, in adipose tissue, expressed by macrophages.

It is found in the lysosome membrane. The protein localises to the cytoplasm. Its subcellular location is the cytoskeleton. The protein resides in the cell projection. It localises to the filopodium. Functionally, negatively regulates vacuolar (H+)-ATPase (V-ATPase) activity by interacting with members of V-ATPase V0 complex and hence inhibiting V1-V0 complex assembly. Required for multinucleation during osteoclast differentiation. In Homo sapiens (Human), this protein is Transmembrane 4 L6 family member 19 (TM4SF19).